Reading from the N-terminus, the 1403-residue chain is Sushi, nidogen and EGF-like domain-containing protein 1 (1403 aa).

Positions 1 to 24 (MRLGAAWALLLAAALGLGTRGVRA) are cleaved as a signal peptide. The 156-residue stretch at 103–258 (AFWADVDNRR…GRWAFRIDDA (156 aa)) folds into the NIDO domain. EGF-like domains are found at residues 268-309 (TTSV…RRCH), 311-347 (DVNE…PTCE), and 349-385 (AQSP…ATCE). 18 disulfides stabilise this stretch: Cys-272-Cys-284, Cys-278-Cys-297, Cys-299-Cys-308, Cys-315-Cys-326, Cys-320-Cys-335, Cys-337-Cys-346, Cys-353-Cys-364, Cys-358-Cys-373, Cys-375-Cys-384, Cys-391-Cys-402, Cys-396-Cys-411, Cys-413-Cys-422, Cys-433-Cys-444, Cys-438-Cys-453, Cys-455-Cys-464, Cys-472-Cys-480, Cys-474-Cys-488, and Cys-490-Cys-499. Asn-292 carries N-linked (GlcNAc...) asparagine glycosylation. The region spanning 387–423 (DVDECSSDPCQNGGSCVDLVGNYSCICVEPFEGPQCE) is the EGF-like 4; calcium-binding domain. N-linked (GlcNAc...) asparagine glycosylation is present at Asn-408. EGF-like domains lie at 429–465 (VPSP…LDCR) and 468–500 (ILND…LLCE). N-linked (GlcNAc...) asparagine glycosylation is present at Asn-484. An N-linked (GlcNAc...) asparagine glycan is attached at Asn-536. EGF-like domains lie at 541 to 577 (LPSP…RHCE), 580 to 616 (RPHL…RHCE), 619 to 655 (KPDS…RHCE), and 657 to 693 (APSP…HRCQ). 26 disulfide bridges follow: Cys-545–Cys-556, Cys-550–Cys-565, Cys-567–Cys-576, Cys-584–Cys-595, Cys-589–Cys-604, Cys-606–Cys-615, Cys-623–Cys-634, Cys-628–Cys-643, Cys-645–Cys-654, Cys-661–Cys-672, Cys-666–Cys-681, Cys-683–Cys-692, Cys-698–Cys-739, Cys-724–Cys-751, Cys-757–Cys-768, Cys-762–Cys-777, Cys-779–Cys-788, Cys-795–Cys-806, Cys-800–Cys-815, Cys-817–Cys-826, Cys-833–Cys-844, Cys-838–Cys-853, Cys-855–Cys-864, Cys-871–Cys-882, Cys-876–Cys-891, and Cys-893–Cys-902. The region spanning 696–753 (VDCGHPEEVEHATMRFNGTHVGSVALYTCEPGFSLSALSHIRVCQPQGVWSQPPQCIE) is the Sushi domain. Asn-712 carries N-linked (GlcNAc...) asparagine glycosylation. The region spanning 753-789 (EVDECRSQPCLHGGSCQDLIADYQCLCSPGYEGVHCE) is the EGF-like 11; calcium-binding domain. One can recognise an EGF-like 12; calcium-binding domain in the interval 791–827 (ETDECQAQPCRNGGSCRDLPRAFICQCPEGFVGIHCE). EGF-like domains follow at residues 829–865 (EVDA…YNCE) and 867–903 (VSDP…KDCT). An N-linked (GlcNAc...) asparagine glycan is attached at Asn-886. Fibronectin type-III domains lie at 908–1006 (PPTA…TRPR), 1007–1105 (PIED…TRPL), and 1106–1200 (PPAN…SPRD). N-linked (GlcNAc...) asparagine glycans are attached at residues Asn-977, Asn-1015, Asn-1109, Asn-1139, and Asn-1298. The EGF-like 15 domain occupies 1306 to 1342 (TPGSCSEDACQNGGTCVPGADAHSCDCRPGFKGRHCE). 3 disulfide bridges follow: Cys-1310-Cys-1321, Cys-1315-Cys-1330, and Cys-1332-Cys-1341.

Post-translationally, phosphorylated on serine and threonine residues. In terms of processing, N-glycosylated. As to expression, expressed in lung.

The protein resides in the secreted. The protein localises to the extracellular space. It localises to the extracellular matrix. This chain is Sushi, nidogen and EGF-like domain-containing protein 1, found in Mus musculus (Mouse).